The chain runs to 383 residues: Heme chaperone HemW (383 aa).

The Radical SAM core domain occupies 1 to 241 (MPKLPPLSLY…LTMAGYQQYE (241 aa)). Y10 is a binding site for S-adenosyl-L-methionine. Residues C16, C20, and C23 each contribute to the [4Fe-4S] cluster site. S-adenosyl-L-methionine contacts are provided by residues G70, 71 to 72 (GT), E103, Q130, R142, and D167.

It belongs to the anaerobic coproporphyrinogen-III oxidase family. HemW subfamily. It depends on [4Fe-4S] cluster as a cofactor.

The protein resides in the cytoplasm. In terms of biological role, probably acts as a heme chaperone, transferring heme to an unknown acceptor. Binds one molecule of heme per monomer, possibly covalently. Binds 1 [4Fe-4S] cluster. The cluster is coordinated with 3 cysteines and an exchangeable S-adenosyl-L-methionine. The chain is Heme chaperone HemW from Haemophilus influenzae (strain ATCC 51907 / DSM 11121 / KW20 / Rd).